The sequence spans 429 residues: Putative pentatricopeptide repeat-containing protein At1g03510 (429 aa).

PPR repeat units follow at residues 11–45 (KLISLTKQLSSYANQGNHEQALNLFLQMHSSFALP), 47–81 (DAHVFSLALKSCAAAFRPVLGGSVHAHSVKSNFLS), 82–112 (NPFVGCALLDMYGKCLSVSHARKLFDEIPQR), 113–147 (NAVVWNAMISHYTHCGKVKEAVELYEAMDVMPNES), 148–180 (SFNAIIKGLVGTEDGSYRAIEFYRKMIEFRFKP), 181–215 (NLITLLALVSACSAIGAFRLIKEIHSYAFRNLIEP), 216–246 (HPQLKSGLVEAYGRCGSIVYVQLVFDSMEDR), 247–281 (DVVAWSSLISAYALHGDAESALKTFQEMELAKVTP), 282–312 (DDIAFLNVLKACSHAGLADEALVYFKRMQGD), and 318–348 (SKDHYSCLVDVLSRVGRFEEAYKVIQAMPEK). A type E motif region spans residues 353-428 (TWGALLGACR…SPGSSWCLFK (76 aa)).

Belongs to the PPR family. PCMP-E subfamily.

The sequence is that of Putative pentatricopeptide repeat-containing protein At1g03510 (PCMP-E3) from Arabidopsis thaliana (Mouse-ear cress).